The following is a 202-amino-acid chain: Glycerol-3-phosphate acyltransferase (202 aa).

The next 4 membrane-spanning stretches (helical) occupy residues 11-31 (VLIAALVLGYACGAIPFGLIL), 87-107 (PALAAGLGAFLGHLFPVWLGF), 116-136 (FIGVLLALSPVTLAAFAAIWL), and 158-178 (LILWALGHGAVAALFLVLAAL).

The protein belongs to the PlsY family. In terms of assembly, probably interacts with PlsX.

It localises to the cell inner membrane. The enzyme catalyses an acyl phosphate + sn-glycerol 3-phosphate = a 1-acyl-sn-glycero-3-phosphate + phosphate. It participates in lipid metabolism; phospholipid metabolism. In terms of biological role, catalyzes the transfer of an acyl group from acyl-phosphate (acyl-PO(4)) to glycerol-3-phosphate (G3P) to form lysophosphatidic acid (LPA). This enzyme utilizes acyl-phosphate as fatty acyl donor, but not acyl-CoA or acyl-ACP. The protein is Glycerol-3-phosphate acyltransferase of Methylorubrum extorquens (strain PA1) (Methylobacterium extorquens).